Here is a 91-residue protein sequence, read N- to C-terminus: uncharacterized protein (91 aa).

This sequence to phage P2 ORF83.

This is an uncharacterized protein from Escherichia phage 186 (Bacteriophage 186).